We begin with the raw amino-acid sequence, 368 residues long: Peptide chain release factor 2 (368 aa).

Position 245 is an N5-methylglutamine (glutamine 245).

Belongs to the prokaryotic/mitochondrial release factor family. Methylated by PrmC. Methylation increases the termination efficiency of RF2.

The protein localises to the cytoplasm. Its function is as follows. Peptide chain release factor 2 directs the termination of translation in response to the peptide chain termination codons UGA and UAA. The polypeptide is Peptide chain release factor 2 (prfB) (Treponema pallidum (strain Nichols)).